A 638-amino-acid chain; its full sequence is LEAF RUST 10 DISEASE-RESISTANCE LOCUS RECEPTOR-LIKE PROTEIN KINASE-like 2.1 (638 aa).

A signal peptide spans 1–29 (MINLSLYQTNSLSYTIIWMLFVIPSCVLS). At 30–264 (VDERQKHCSP…EHTCGKMGIG (235 aa)) the chain is on the extracellular side. N-linked (GlcNAc...) asparagine glycans are attached at residues Asn69, Asn114, Asn136, Asn204, and Asn239. The helical transmembrane segment at 265–285 (IGLGCGFLGATLITVCLLCFF) threads the bilayer. The Cytoplasmic portion of the chain corresponds to 286-638 (FQKRRTSHHL…YTEVFIGSTS (353 aa)). The region spanning 321–609 (KLFSHTLGKG…VLEVPPKPSI (289 aa)) is the Protein kinase domain. Residues 327–335 (LGKGGFGTV) and Lys349 contribute to the ATP site. The residue at position 393 (Tyr393) is a Phosphotyrosine. Asp444 acts as the Proton acceptor in catalysis. Residue Thr484 is modified to Phosphothreonine.

This sequence belongs to the protein kinase superfamily. Ser/Thr protein kinase family.

Its subcellular location is the membrane. The enzyme catalyses L-seryl-[protein] + ATP = O-phospho-L-seryl-[protein] + ADP + H(+). It carries out the reaction L-threonyl-[protein] + ATP = O-phospho-L-threonyl-[protein] + ADP + H(+). In Arabidopsis thaliana (Mouse-ear cress), this protein is LEAF RUST 10 DISEASE-RESISTANCE LOCUS RECEPTOR-LIKE PROTEIN KINASE-like 2.1.